We begin with the raw amino-acid sequence, 247 residues long: Eukaryotic translation initiation factor 6 (247 aa).

A phosphoserine; by CK1 mark is found at S174 and S175.

This sequence belongs to the eIF-6 family. As to quaternary structure, monomer. Associates with the 60S ribosomal subunit. Phosphorylation at Ser-174 and Ser-175 promotes nuclear export.

The protein localises to the cytoplasm. It is found in the nucleus. Its subcellular location is the nucleolus. Its function is as follows. Binds to the 60S ribosomal subunit and prevents its association with the 40S ribosomal subunit to form the 80S initiation complex in the cytoplasm. Is also involved in ribosome biogenesis. Associates with pre-60S subunits in the nucleus and is involved in its nuclear export. The chain is Eukaryotic translation initiation factor 6 (tif6) from Aspergillus oryzae (strain ATCC 42149 / RIB 40) (Yellow koji mold).